The sequence spans 446 residues: Adenylosuccinate synthetase (446 aa).

Residues 12–18 and 40–42 each bind GTP; these read GDEGKGK and GHT. Residue D13 is the Proton acceptor of the active site. Mg(2+)-binding residues include D13 and G40. IMP-binding positions include 13 to 16, 38 to 41, T128, R142, Q223, T238, and R302; these read DEGK and NAGH. The active-site Proton donor is the H41. 298-304 serves as a coordination point for substrate; it reads TTTGRRR. GTP is bound by residues R304, 330 to 332, and 412 to 414; these read KLD and SLG.

It belongs to the adenylosuccinate synthetase family. In terms of assembly, homodimer. The cofactor is Mg(2+).

The protein resides in the cytoplasm. It carries out the reaction IMP + L-aspartate + GTP = N(6)-(1,2-dicarboxyethyl)-AMP + GDP + phosphate + 2 H(+). Its pathway is purine metabolism; AMP biosynthesis via de novo pathway; AMP from IMP: step 1/2. Functionally, plays an important role in the de novo pathway of purine nucleotide biosynthesis. Catalyzes the first committed step in the biosynthesis of AMP from IMP. The protein is Adenylosuccinate synthetase of Crocosphaera subtropica (strain ATCC 51142 / BH68) (Cyanothece sp. (strain ATCC 51142)).